A 231-amino-acid polypeptide reads, in one-letter code: Killer cell lectin-like receptor subfamily F member 1 (231 aa).

Topologically, residues methionine 1–lysine 38 are cytoplasmic. Tyrosine 7 carries the phosphotyrosine modification. The chain crosses the membrane as a helical; Signal-anchor for type II membrane protein span at residues isoleucine 39–isoleucine 59. The Extracellular segment spans residues leucine 60–tyrosine 231. Residues asparagine 77, asparagine 91, asparagine 96, and asparagine 176 are each glycosylated (N-linked (GlcNAc...) asparagine). The 110-residue stretch at tyrosine 121–glutamine 230 folds into the C-type lectin domain. 2 disulfide bridges follow: cysteine 142-cysteine 229 and cysteine 208-cysteine 221.

Homodimer. Interacts with CLEC2B. In terms of processing, phosphorylated on Tyr-7; this phosphorylation is required for NKp80/KLRF1-mediated cytotoxicity.

It localises to the membrane. In terms of biological role, functions as an activating receptor involved in immunosurveillance upon binding to various ligands displayed at the surface of myeloid cells. Upon interaction with CLEC2B ligand, stimulates NK-cell cytotoxicity and cytokine production leading to the cytolysis of malignant CLEC2B-expressing myeloid cells. Actviation of the common cytotoxicity pathway involves SRC and SYK kinases. The polypeptide is Killer cell lectin-like receptor subfamily F member 1 (KLRF1) (Macaca fascicularis (Crab-eating macaque)).